A 129-amino-acid polypeptide reads, in one-letter code: MKVLEARDAYLTNAEVFFHLKEMENEQNARTQERGAAQALVCENLRTIQFEILKYLSSQGNCEGLTKERFLDCIAIFNEFELTKAEILVILNNKPSSVPELYACIEGIEERFKEEDIFKLVEKINTTFP.

This sequence belongs to the eukaryotic RPC9 RNA polymerase subunit family. In terms of assembly, component of the RNA polymerase III (Pol III) complex.

The protein resides in the cytoplasm. Its subcellular location is the nucleus. In terms of biological role, DNA-dependent RNA polymerase catalyzes the transcription of DNA into RNA using the four ribonucleoside triphosphates as substrates. Specific peripheric component of RNA polymerase III which synthesizes small RNAs, such as 5S rRNA and tRNAs. The chain is DNA-directed RNA polymerase III subunit rpc9 (rpc17) from Schizosaccharomyces pombe (strain 972 / ATCC 24843) (Fission yeast).